Consider the following 806-residue polypeptide: LisH domain-containing protein ARMC9 (806 aa).

Positions 7 to 39 (YEADLLGLVKEFLNFGEFQETLECFSKECKIKG) constitute a LisH domain. Positions 194-230 (KLITLYKESLHNNQEQLQQLQQQLMETEHKARTYKKC) form a coiled coil. Disordered regions lie at residues 576-604 (FDES…DLDK), 650-736 (PLQR…SPRI), and 748-806 (NSSK…SYRK). The segment covering 579-604 (SVESDDEEEEKDDEEDEDALEADLDK) has biased composition (acidic residues). A compositionally biased stretch (polar residues) spans 655–688 (VTPSSHRAMNTVRKNSNSPSPLTNTFKSSQANKM). Residues 689–708 (SLSSSRPPTRSGSRASSSDS) show a composition bias toward low complexity. Positions 759-782 (EVQNATSRKTRTPTIAPQFSQSGP) are enriched in polar residues. Low complexity predominate over residues 783–806 (QQTSYSSSAGSSTRSRQSTQSYRK).

It is found in the cytoplasm. Its subcellular location is the cytoskeleton. The protein resides in the cilium basal body. It localises to the cell projection. The protein localises to the cilium. It is found in the microtubule organizing center. Its subcellular location is the centrosome. The protein resides in the centriole. Functionally, involved in ciliogenesis. It is required for appropriate acetylation and polyglutamylation of ciliary microtubules, and regulation of cilium length. Acts as a positive regulator of hedgehog (Hh)signaling. This Xenopus laevis (African clawed frog) protein is LisH domain-containing protein ARMC9 (armc9).